Here is a 353-residue protein sequence, read N- to C-terminus: MKIAYVVSSKKKCGPNIVILNIVKELANKHEMEIFFLDESDDDVFECVNVKSTQIKKASDLKEHLKRFDIIHSSGIRPDALVVLCKVIYRVKCKIITTIHNYVFQDLYYSYGLVKSLIWGLLWCSIWLFFDKLVILSKNADNYYWFLPSAKKNIIYNGIDDNDCLQNKKCNYRKEFNIPDDGILAGSCANLTKCKGIDLVIQTLTKEHKIYYIVAGDGIEKHNLINLVKARKLHERVYFIDFLDEPESFMSQLDVFLMPSRSEGFGLTVLESTKLGIPVITSNIPIFMELFDQMCLTFDIKNPSTLIDVITYAKKNRLHLSQKFHAIFQDRFTSSKMATKYENVYNNLFREVL.

The helical transmembrane segment at 116 to 136 threads the bilayer; that stretch reads SLIWGLLWCSIWLFFDKLVIL. UDP is bound by residues asparagine 190 and glutamate 271. The E(x7)E glycosyltransferase motif signature appears at 263 to 271; the sequence is EGFGLTVLE.

It belongs to the glycosyltransferase group 1 family. Glycosyltransferase 4 subfamily.

Its subcellular location is the membrane. The protein operates within bacterial outer membrane biogenesis; LPS O-antigen biosynthesis. Functionally, involved in the assembly of the O-repeating unit during O-antigen biosynthesis. N-acetylglucosamine transferase accountable for the alpha-D-GlcNAc-1,4-beta-D-Gal linkage within the O-antigen. The protein is O-antigen biosynthesis glycosyltransferase WclY of Escherichia coli.